The following is a 130-amino-acid chain: Transcription antitermination protein NusB (130 aa).

It belongs to the NusB family.

In terms of biological role, involved in transcription antitermination. Required for transcription of ribosomal RNA (rRNA) genes. Binds specifically to the boxA antiterminator sequence of the ribosomal RNA (rrn) operons. In Macrococcus caseolyticus (strain JCSC5402) (Macrococcoides caseolyticum), this protein is Transcription antitermination protein NusB.